Here is a 123-residue protein sequence, read N- to C-terminus: MALTQEDIINAVAEMSVMEVAELVSAMEEKFGVSAAAAVVAGPGGGEAEEAEEQTEFDLVLTSAGEKKVNVIKVVREITGLGLKEAKAAVDGAPATLKEGMSKEDGDEAKTKLEEAGASVELK.

The residue at position 84 (Lys84) is an N6-methyllysine. A disordered region spans residues 94–123 (PATLKEGMSKEDGDEAKTKLEEAGASVELK). A compositionally biased stretch (basic and acidic residues) spans 100 to 115 (GMSKEDGDEAKTKLEE).

It belongs to the bacterial ribosomal protein bL12 family. In terms of assembly, homodimer. Part of the ribosomal stalk of the 50S ribosomal subunit. Forms a multimeric L10(L12)X complex, where L10 forms an elongated spine to which 2 to 4 L12 dimers bind in a sequential fashion. Binds GTP-bound translation factors.

Seems to be the binding site for several of the factors involved in protein synthesis and appears to be essential for accurate translation. Functionally, forms part of the ribosomal stalk which helps the ribosome interact with GTP-bound translation factors. Is thus essential for accurate translation. In Halophilic eubacterium NRCC 41227, this protein is Large ribosomal subunit protein bL12.